A 34-amino-acid chain; its full sequence is Photosystem II reaction center protein M (34 aa).

The helical transmembrane segment at 5-25 (ILAFIATVLFILVPTAFLLII) threads the bilayer.

The protein belongs to the PsbM family. In terms of assembly, PSII is composed of 1 copy each of membrane proteins PsbA, PsbB, PsbC, PsbD, PsbE, PsbF, PsbH, PsbI, PsbJ, PsbK, PsbL, PsbM, PsbT, PsbX, PsbY, PsbZ, Psb30/Ycf12, at least 3 peripheral proteins of the oxygen-evolving complex and a large number of cofactors. It forms dimeric complexes.

Its subcellular location is the plastid. The protein localises to the chloroplast thylakoid membrane. Its function is as follows. One of the components of the core complex of photosystem II (PSII). PSII is a light-driven water:plastoquinone oxidoreductase that uses light energy to abstract electrons from H(2)O, generating O(2) and a proton gradient subsequently used for ATP formation. It consists of a core antenna complex that captures photons, and an electron transfer chain that converts photonic excitation into a charge separation. This subunit is found at the monomer-monomer interface. This Piper cenocladum (Ant piper) protein is Photosystem II reaction center protein M.